The primary structure comprises 500 residues: NAD(P)H-quinone oxidoreductase chain 4, chloroplastic (500 aa).

The next 12 membrane-spanning stretches (helical) occupy residues 4-24, 37-57, 80-100, 134-154, 167-187, 208-228, 242-262, 272-292, 330-350, 386-406, 416-436, and 462-482; these read FPWL…ILFI, ICIC…NFQL, LGID…TTLA, LLLF…LLSM, FILY…GMGL, GLEI…PPII, HYST…YGLV, AHSL…IYAA, GAIL…FLAG, LASP…GIIT, ILIT…LLSM, and IFIL…PDFV.

This sequence belongs to the complex I subunit 4 family.

Its subcellular location is the plastid. The protein localises to the chloroplast thylakoid membrane. The catalysed reaction is a plastoquinone + NADH + (n+1) H(+)(in) = a plastoquinol + NAD(+) + n H(+)(out). It catalyses the reaction a plastoquinone + NADPH + (n+1) H(+)(in) = a plastoquinol + NADP(+) + n H(+)(out). This chain is NAD(P)H-quinone oxidoreductase chain 4, chloroplastic, found in Amborella trichopoda.